The sequence spans 474 residues: Mitogen-activated protein kinase pmk-3 (474 aa).

The segment covering 1 to 13 (MASVPSSSSLPVS) has biased composition (low complexity). A disordered region spans residues 1–90 (MASVPSSSSL…EEEEDILSKP (90 aa)). The span at 30–48 (KRSNNQSQPPESYEPNTWL) shows a compositional bias: polar residues. A compositionally biased stretch (basic and acidic residues) spans 52-69 (REQEQQKKLAAENIKKQS). The region spanning 114–419 (YDVEPNSIEY…VEEAIQHPYL (306 aa)) is the Protein kinase domain. ATP-binding positions include 124-132 (LGGGSFGNV) and K150. D252 functions as the Proton acceptor in the catalytic mechanism. T285 carries the phosphothreonine modification. Positions 285–287 (TQY) match the TXY motif. Residue Y287 is modified to Phosphotyrosine.

The protein belongs to the protein kinase superfamily. CMGC Ser/Thr protein kinase family. MAP kinase subfamily. In terms of assembly, interacts with mak-2. May interact with vhp-1. May interact with uev-3. Mg(2+) is required as a cofactor. Post-translationally, dually phosphorylated on Thr-285 and Tyr-287, which activates the enzyme. As to expression, expressed throughout the intestine.

Its subcellular location is the nucleus. The protein resides in the cytoplasm. It is found in the cell projection. The protein localises to the axon. It localises to the dendrite. Its subcellular location is the cilium. The catalysed reaction is L-seryl-[protein] + ATP = O-phospho-L-seryl-[protein] + ADP + H(+). The enzyme catalyses L-threonyl-[protein] + ATP = O-phospho-L-threonyl-[protein] + ADP + H(+). Activated by phosphorylation on threonine and tyrosine. In terms of biological role, responds to activation by environmental stress and pro-inflammatory cytokines by phosphorylating downstream targets. Involved in axon regeneration after injury, probably downstream of dlk-1 and mkk-4 and upstream of mak-2. May phosphorylate mak-2. Plays a role in cilium length regulation, possibly by reducing rab-5 mediated endocytosis. Plays a role in the formation of muscle connections, also called muscle arm extensions, between the body wall and the motor axons in the dorsal and ventral cord. The sequence is that of Mitogen-activated protein kinase pmk-3 (pmk-3) from Caenorhabditis elegans.